Consider the following 271-residue polypeptide: Ribosomal RNA small subunit methyltransferase A (271 aa).

Residues H11, L13, G38, E58, D86, and N101 each coordinate S-adenosyl-L-methionine.

The protein belongs to the class I-like SAM-binding methyltransferase superfamily. rRNA adenine N(6)-methyltransferase family. RsmA subfamily.

Its subcellular location is the cytoplasm. The enzyme catalyses adenosine(1518)/adenosine(1519) in 16S rRNA + 4 S-adenosyl-L-methionine = N(6)-dimethyladenosine(1518)/N(6)-dimethyladenosine(1519) in 16S rRNA + 4 S-adenosyl-L-homocysteine + 4 H(+). Its function is as follows. Specifically dimethylates two adjacent adenosines (A1518 and A1519) in the loop of a conserved hairpin near the 3'-end of 16S rRNA in the 30S particle. May play a critical role in biogenesis of 30S subunits. In Helicobacter pylori (strain P12), this protein is Ribosomal RNA small subunit methyltransferase A.